The primary structure comprises 309 residues: NmrA-like family domain-containing protein 1 (309 aa).

NADP(+)-binding positions include 11–16, 37–41, 58–59, 79–81, Lys-102, Lys-143, and 165–168; these read GATGAQ, RNPEQ, DQ, TNY, and YFEN. Positions 163 to 199 are interaction with ASS1; it reads PCYFENLLSYFLPQKAADGKSFLLDLPMGDVPMDGMS.

The protein belongs to the NmrA-type oxidoreductase family. As to quaternary structure, homodimer. Interacts with ASS1. Interaction is enhanced by low NADPH/NADP(+) ratios, which results in inhibition of ASS1 activity.

The protein localises to the cytoplasm. Its subcellular location is the perinuclear region. It localises to the nucleus. Redox sensor protein. Undergoes restructuring and subcellular redistribution in response to changes in intracellular NADPH/NADP(+) levels. At low NADPH concentrations the protein is found mainly as a monomer, and binds argininosuccinate synthase (ASS1), the enzyme involved in nitric oxide synthesis. Association with ASS1 impairs its activity and reduces the production of nitric oxide, which subsecuently prevents apoptosis. Under normal NADPH concentrations, the protein is found as a dimer and hides the binding site for ASS1. The homodimer binds one molecule of NADPH. Has higher affinity for NADPH than for NADP(+). Binding to NADPH is necessary to form a stable dimer. This Mus musculus (Mouse) protein is NmrA-like family domain-containing protein 1 (Nmral1).